Reading from the N-terminus, the 454-residue chain is CBL-interacting protein kinase 4 (454 aa).

The 260-residue stretch at Y25–F284 folds into the Protein kinase domain. ATP contacts are provided by residues L31–V39 and K54. The Proton acceptor role is filled by D151. Residues D169–E198 form an activation loop region. In terms of domain architecture, NAF spans A311 to G335. The segment at L341–V370 is PPI.

The protein belongs to the protein kinase superfamily. CAMK Ser/Thr protein kinase family. SNF1 subfamily. Mn(2+) is required as a cofactor.

The enzyme catalyses L-seryl-[protein] + ATP = O-phospho-L-seryl-[protein] + ADP + H(+). It carries out the reaction L-threonyl-[protein] + ATP = O-phospho-L-threonyl-[protein] + ADP + H(+). CIPK serine-threonine protein kinases interact with CBL proteins. Binding of a CBL protein to the regulatory NAF domain of CIPK protein lead to the activation of the kinase in a calcium-dependent manner. The chain is CBL-interacting protein kinase 4 (CIPK4) from Oryza sativa subsp. japonica (Rice).